Reading from the N-terminus, the 91-residue chain is uncharacterized protein (91 aa).

A helical transmembrane segment spans residues 7-23 (IALVGVVVVLFGALRYQ).

It localises to the membrane. This is an uncharacterized protein from Haemophilus influenzae (strain ATCC 51907 / DSM 11121 / KW20 / Rd).